The primary structure comprises 259 residues: Carbonic anhydrase 1 (259 aa).

A1 bears the N-acetylalanine mark. The Alpha-carbonic anhydrase domain occupies 2–258; the sequence is HAWGYGPTDG…LKGRHVRASF (257 aa). Residue H63 is the Proton donor/acceptor of the active site. H93, H95, and H118 together coordinate Zn(2+). Substrate-binding positions include T197 and 197–198; that span reads TT.

Belongs to the alpha-carbonic anhydrase family. Zn(2+) is required as a cofactor.

It localises to the cytoplasm. The enzyme catalyses hydrogencarbonate + H(+) = CO2 + H2O. Its function is as follows. Catalyzes the reversible hydration of carbon dioxide. The sequence is that of Carbonic anhydrase 1 (ca1) from Chionodraco hamatus (Antarctic teleost icefish).